The chain runs to 195 residues: Large ribosomal subunit protein eL6 (195 aa).

Phosphoserine is present on residues serine 105 and serine 115.

It belongs to the eukaryotic ribosomal protein eL6 family. As to quaternary structure, component of the large ribosomal subunit (LSU). Mature yeast ribosomes consist of a small (40S) and a large (60S) subunit. The 40S small subunit contains 1 molecule of ribosomal RNA (18S rRNA) and at least 33 different proteins. The large 60S subunit contains 3 rRNA molecules (25S, 5.8S and 5S rRNA) and at least 46 different proteins.

The protein resides in the cytoplasm. Its subcellular location is the nucleus. It is found in the nucleolus. In terms of biological role, component of the ribosome, a large ribonucleoprotein complex responsible for the synthesis of proteins in the cell. The small ribosomal subunit (SSU) binds messenger RNAs (mRNAs) and translates the encoded message by selecting cognate aminoacyl-transfer RNA (tRNA) molecules. The large subunit (LSU) contains the ribosomal catalytic site termed the peptidyl transferase center (PTC), which catalyzes the formation of peptide bonds, thereby polymerizing the amino acids delivered by tRNAs into a polypeptide chain. The nascent polypeptides leave the ribosome through a tunnel in the LSU and interact with protein factors that function in enzymatic processing, targeting, and the membrane insertion of nascent chains at the exit of the ribosomal tunnel. This is Large ribosomal subunit protein eL6 (rpl6) from Schizosaccharomyces pombe (strain 972 / ATCC 24843) (Fission yeast).